A 336-amino-acid chain; its full sequence is Holliday junction branch migration complex subunit RuvB (336 aa).

Residues 1–182 are large ATPase domain (RuvB-L); sequence MKERIVNLET…FGMSFRMQFY (182 aa). Residues Leu21, Arg22, Gly63, Lys66, Thr67, Ser68, 129-131, Arg172, Tyr182, and Arg219 contribute to the ATP site; that span reads EDF. Thr67 provides a ligand contact to Mg(2+). A small ATPAse domain (RuvB-S) region spans residues 183-253; that stretch reads SPSELSLIIK…ITLHALNELG (71 aa). Residues 256-336 form a head domain (RuvB-H) region; sequence ELGFDEADLA…IPTLNPQTLF (81 aa). Residues Arg310 and Arg315 each contribute to the DNA site.

Belongs to the RuvB family. In terms of assembly, homohexamer. Forms an RuvA(8)-RuvB(12)-Holliday junction (HJ) complex. HJ DNA is sandwiched between 2 RuvA tetramers; dsDNA enters through RuvA and exits via RuvB. An RuvB hexamer assembles on each DNA strand where it exits the tetramer. Each RuvB hexamer is contacted by two RuvA subunits (via domain III) on 2 adjacent RuvB subunits; this complex drives branch migration. In the full resolvosome a probable DNA-RuvA(4)-RuvB(12)-RuvC(2) complex forms which resolves the HJ.

The protein localises to the cytoplasm. The enzyme catalyses ATP + H2O = ADP + phosphate + H(+). In terms of biological role, the RuvA-RuvB-RuvC complex processes Holliday junction (HJ) DNA during genetic recombination and DNA repair, while the RuvA-RuvB complex plays an important role in the rescue of blocked DNA replication forks via replication fork reversal (RFR). RuvA specifically binds to HJ cruciform DNA, conferring on it an open structure. The RuvB hexamer acts as an ATP-dependent pump, pulling dsDNA into and through the RuvAB complex. RuvB forms 2 homohexamers on either side of HJ DNA bound by 1 or 2 RuvA tetramers; 4 subunits per hexamer contact DNA at a time. Coordinated motions by a converter formed by DNA-disengaged RuvB subunits stimulates ATP hydrolysis and nucleotide exchange. Immobilization of the converter enables RuvB to convert the ATP-contained energy into a lever motion, pulling 2 nucleotides of DNA out of the RuvA tetramer per ATP hydrolyzed, thus driving DNA branch migration. The RuvB motors rotate together with the DNA substrate, which together with the progressing nucleotide cycle form the mechanistic basis for DNA recombination by continuous HJ branch migration. Branch migration allows RuvC to scan DNA until it finds its consensus sequence, where it cleaves and resolves cruciform DNA. This Helicobacter pylori (strain J99 / ATCC 700824) (Campylobacter pylori J99) protein is Holliday junction branch migration complex subunit RuvB.